The following is a 744-amino-acid chain: Catalase-peroxidase (744 aa).

The segment at 1–21 (MANESKCPFHQTAGGGTSNRD) is disordered. Residues 91 to 241 (WHSAGTYRIG…LAAVQMGLIY (151 aa)) constitute a cross-link (tryptophyl-tyrosyl-methioninium (Trp-Tyr) (with M-267)). His-92 functions as the Proton acceptor in the catalytic mechanism. The tryptophyl-tyrosyl-methioninium (Tyr-Met) (with W-91) cross-link spans 241 to 267 (YVNPEGPEGNPDPVASGKDIRDTFGRM). Heme b is bound at residue His-282. Residues 361–387 (GAHQWRPKDGKGANTVPDAHDTTKRHA) form a disordered region.

The protein belongs to the peroxidase family. Peroxidase/catalase subfamily. As to quaternary structure, homodimer or homotetramer. It depends on heme b as a cofactor. Post-translationally, formation of the three residue Trp-Tyr-Met cross-link is important for the catalase, but not the peroxidase activity of the enzyme.

The catalysed reaction is H2O2 + AH2 = A + 2 H2O. It carries out the reaction 2 H2O2 = O2 + 2 H2O. In terms of biological role, bifunctional enzyme with both catalase and broad-spectrum peroxidase activity. In Pseudomonas entomophila (strain L48), this protein is Catalase-peroxidase.